The following is a 115-amino-acid chain: Nucleoid-associated protein tlr0723 (115 aa).

This sequence belongs to the YbaB/EbfC family. As to quaternary structure, homodimer.

It is found in the cytoplasm. Its subcellular location is the nucleoid. Its function is as follows. Binds to DNA and alters its conformation. May be involved in regulation of gene expression, nucleoid organization and DNA protection. In Thermosynechococcus vestitus (strain NIES-2133 / IAM M-273 / BP-1), this protein is Nucleoid-associated protein tlr0723.